Here is a 373-residue protein sequence, read N- to C-terminus: Potential protein lysine methyltransferase SET6 (373 aa).

Residues 12-338 enclose the SET domain; that stretch reads PFFQVRQTKW…KDEQICIDYS (327 aa).

This sequence belongs to the class V-like SAM-binding methyltransferase superfamily.

Functionally, involved in resistance to compounds that target ergosterol biosynthesis, including fenpropimorph, dyclonine, and alverine citrate. Since a deletion in the absence of these compounds does not have an effect on growth, is more likely to be involved in compound availability. This chain is Potential protein lysine methyltransferase SET6 (SET6), found in Saccharomyces cerevisiae (strain ATCC 204508 / S288c) (Baker's yeast).